The primary structure comprises 368 residues: Phospho-N-acetylmuramoyl-pentapeptide-transferase (368 aa).

A run of 9 helical transmembrane segments spans residues Leu50 to Leu70, Pro95 to Gly115, Ser117 to Asp137, Leu156 to Trp176, Ile183 to Phe203, Leu218 to Ala238, Pro242 to Asn262, Ala284 to Leu304, and Thr347 to Leu367.

This sequence belongs to the glycosyltransferase 4 family. MraY subfamily. The cofactor is Mg(2+).

The protein resides in the cell inner membrane. It carries out the reaction UDP-N-acetyl-alpha-D-muramoyl-L-alanyl-gamma-D-glutamyl-meso-2,6-diaminopimeloyl-D-alanyl-D-alanine + di-trans,octa-cis-undecaprenyl phosphate = di-trans,octa-cis-undecaprenyl diphospho-N-acetyl-alpha-D-muramoyl-L-alanyl-D-glutamyl-meso-2,6-diaminopimeloyl-D-alanyl-D-alanine + UMP. It functions in the pathway cell wall biogenesis; peptidoglycan biosynthesis. Catalyzes the initial step of the lipid cycle reactions in the biosynthesis of the cell wall peptidoglycan: transfers peptidoglycan precursor phospho-MurNAc-pentapeptide from UDP-MurNAc-pentapeptide onto the lipid carrier undecaprenyl phosphate, yielding undecaprenyl-pyrophosphoryl-MurNAc-pentapeptide, known as lipid I. The chain is Phospho-N-acetylmuramoyl-pentapeptide-transferase from Synechococcus sp. (strain ATCC 27144 / PCC 6301 / SAUG 1402/1) (Anacystis nidulans).